Consider the following 876-residue polypeptide: Leucine--tRNA ligase (876 aa).

Residues 43–53 carry the 'HIGH' region motif; it reads PYPSGRIHMGH. The short motif at 632–636 is the 'KMSKS' region element; that stretch reads KMSKS. Lysine 635 is an ATP binding site.

It belongs to the class-I aminoacyl-tRNA synthetase family.

The protein localises to the cytoplasm. The catalysed reaction is tRNA(Leu) + L-leucine + ATP = L-leucyl-tRNA(Leu) + AMP + diphosphate. The chain is Leucine--tRNA ligase from Rhizobium etli (strain ATCC 51251 / DSM 11541 / JCM 21823 / NBRC 15573 / CFN 42).